Consider the following 377-residue polypeptide: Adaptive-response sensory kinase SasA (377 aa).

Residues methionine 154–arginine 373 form the Histidine kinase domain. Histidine 157 is modified (phosphohistidine; by autocatalysis).

In terms of assembly, homooligomerizes. Interacts with KaiC. Participates in the KaiABC clock complex, whose core is composed of a KaiC homohexamer, 6 KaiB and up to 6 KaiA dimers. SasA and KaiB(fs) compete to bind to KaiC.

It carries out the reaction ATP + protein L-histidine = ADP + protein N-phospho-L-histidine.. Member of the two-component regulatory system SasA/RpaA involved in genome-wide circadian gene expression. One of several clock output pathways. Participates in the Kai clock protein complex, the main circadian regulator in cyanobacteria, via its interaction with KaiC. KaiC enhances the autophosphorylation activity of SasA, which then transfers its phosphate group to RpaA to activate it. In addition to its output function, recruits fold-shifted KaiB (KaiB(fs)) to KaiC to cooperatively form the KaiB(6):KaiC(6) complex (independent of SasA kinase activity). Required for robustness of the circadian rhythm of gene expression and is involved in clock output, also required for adaptation to light/dark cycles. In Synechococcus sp. (strain JA-3-3Ab) (Cyanobacteria bacterium Yellowstone A-Prime), this protein is Adaptive-response sensory kinase SasA.